A 196-amino-acid chain; its full sequence is Imidazole glycerol phosphate synthase subunit HisH (196 aa).

Residues 2 to 196 (NVVIVDTECA…LKRFLELTLC (195 aa)) enclose the Glutamine amidotransferase type-1 domain. Cys-77 acts as the Nucleophile in catalysis. Active-site residues include His-175 and Glu-177.

As to quaternary structure, heterodimer of HisH and HisF.

The protein resides in the cytoplasm. It catalyses the reaction 5-[(5-phospho-1-deoxy-D-ribulos-1-ylimino)methylamino]-1-(5-phospho-beta-D-ribosyl)imidazole-4-carboxamide + L-glutamine = D-erythro-1-(imidazol-4-yl)glycerol 3-phosphate + 5-amino-1-(5-phospho-beta-D-ribosyl)imidazole-4-carboxamide + L-glutamate + H(+). The catalysed reaction is L-glutamine + H2O = L-glutamate + NH4(+). Its pathway is amino-acid biosynthesis; L-histidine biosynthesis; L-histidine from 5-phospho-alpha-D-ribose 1-diphosphate: step 5/9. In terms of biological role, IGPS catalyzes the conversion of PRFAR and glutamine to IGP, AICAR and glutamate. The HisH subunit catalyzes the hydrolysis of glutamine to glutamate and ammonia as part of the synthesis of IGP and AICAR. The resulting ammonia molecule is channeled to the active site of HisF. This Idiomarina loihiensis (strain ATCC BAA-735 / DSM 15497 / L2-TR) protein is Imidazole glycerol phosphate synthase subunit HisH.